The chain runs to 159 residues: MFLRQEDFATVVRSTPLVSLDFIVENSRGEFLLGKRTNRPAQGYWFVPGGRVQKDETLEAAFERLTMAELGLRLPITAGQFYGVWQHFYDDNFSGTDFTTHYVVLGFRFRVAEEELLLPDEQHDDYRWLTPDALLASNDVHANSRAYFLAEKRAGVPGL.

Residues 2 to 3, phenylalanine 8, and arginine 36 each bind substrate; that span reads FL. A Nudix hydrolase domain is found at 13-153; the sequence is RSTPLVSLDF…SRAYFLAEKR (141 aa). Residues glycine 49, glutamate 69, and glutamine 122 each contribute to the Mg(2+) site. A Nudix box motif is present at residues 50-71; it reads GRVQKDETLEAAFERLTMAELG.

The protein belongs to the Nudix hydrolase family. In terms of assembly, homodimer. Mg(2+) serves as cofactor.

It catalyses the reaction GDP-alpha-D-mannose + H2O = D-mannose + GDP + H(+). Functionally, hydrolyzes GDP-mannose. In Escherichia coli O157:H7, this protein is GDP-mannose mannosyl hydrolase.